The chain runs to 267 residues: Methylglyoxal reductase DkgB (267 aa).

Y39 functions as the Proton donor in the catalytic mechanism. A substrate-binding site is contributed by H97. 179-231 (MTLAYGKALKDEVIARIAAKHNATPAQVILAWAMGEGYSVIPSSTRRENLASS) contributes to the NADP(+) binding site.

It belongs to the aldo/keto reductase family. In terms of assembly, monomer.

The protein localises to the cytoplasm. The catalysed reaction is hydroxyacetone + NADP(+) = methylglyoxal + NADPH + H(+). Functionally, aldo-keto reductase that significantly contributes to cellular methylglyoxal detoxification by catalyzing the NADPH-dependent conversion of methylglyoxal to acetol. This Salmonella typhimurium (strain LT2 / SGSC1412 / ATCC 700720) protein is Methylglyoxal reductase DkgB.